Here is a 197-residue protein sequence, read N- to C-terminus: Large ribosomal subunit protein bL25 (197 aa).

This sequence belongs to the bacterial ribosomal protein bL25 family. CTC subfamily. As to quaternary structure, part of the 50S ribosomal subunit; part of the 5S rRNA/L5/L18/L25 subcomplex. Contacts the 5S rRNA. Binds to the 5S rRNA independently of L5 and L18.

This is one of the proteins that binds to the 5S RNA in the ribosome where it forms part of the central protuberance. This chain is Large ribosomal subunit protein bL25, found in Pseudomonas putida (strain ATCC 700007 / DSM 6899 / JCM 31910 / BCRC 17059 / LMG 24140 / F1).